Consider the following 79-residue polypeptide: Conotoxin MIVA (79 aa).

Residues 1–21 form the signal peptide; it reads MGMRMMFTVFLLVVLATTVVS. The propeptide occupies 22-38; that stretch reads IPSDRASDGRNAVVHER. Pro-40 carries the 4-hydroxyproline modification. Position 41 is a 4-carboxyglutamate (Glu-41). O-linked (HexNAc...) threonine glycans are attached at residues Thr-45 and Thr-47. A 4-hydroxyproline mark is found at Pro-55, Pro-60, Pro-61, Pro-69, Pro-70, and Pro-74. The residue at position 74 (Pro-74) is a Proline amide. The propeptide occupies 75–79; that stretch reads GRRND.

In terms of processing, O-linked glycan consists of Hex4-HexNAc2 hexasaccharide. Post-translationally, contains 3 disulfide bonds. In terms of tissue distribution, expressed by the venom duct.

Its subcellular location is the secreted. Probable neurotoxin with ion channel inhibitor activity. The protein is Conotoxin MIVA of Conus magus (Magical cone).